Here is a 250-residue protein sequence, read N- to C-terminus: 2,3-bisphosphoglycerate-dependent phosphoglycerate mutase (250 aa).

Residues 8–15 (RHGQSAWN), 21–22 (TG), arginine 60, 87–90 (ERHY), lysine 98, 114–115 (RR), and 183–184 (GN) each bind substrate. The active-site Tele-phosphohistidine intermediate is the histidine 9. The Proton donor/acceptor role is filled by glutamate 87.

It belongs to the phosphoglycerate mutase family. BPG-dependent PGAM subfamily. In terms of assembly, homodimer.

The catalysed reaction is (2R)-2-phosphoglycerate = (2R)-3-phosphoglycerate. Its pathway is carbohydrate degradation; glycolysis; pyruvate from D-glyceraldehyde 3-phosphate: step 3/5. In terms of biological role, catalyzes the interconversion of 2-phosphoglycerate and 3-phosphoglycerate. This chain is 2,3-bisphosphoglycerate-dependent phosphoglycerate mutase, found in Nitratidesulfovibrio vulgaris (strain DP4) (Desulfovibrio vulgaris).